Here is a 116-residue protein sequence, read N- to C-terminus: Ribosome-binding factor A (116 aa).

This sequence belongs to the RbfA family. As to quaternary structure, monomer. Binds 30S ribosomal subunits, but not 50S ribosomal subunits or 70S ribosomes.

It localises to the cytoplasm. Its function is as follows. One of several proteins that assist in the late maturation steps of the functional core of the 30S ribosomal subunit. Associates with free 30S ribosomal subunits (but not with 30S subunits that are part of 70S ribosomes or polysomes). Required for efficient processing of 16S rRNA. May interact with the 5'-terminal helix region of 16S rRNA. This is Ribosome-binding factor A from Streptococcus pyogenes serotype M5 (strain Manfredo).